Consider the following 300-residue polypeptide: F-box/LRR-repeat protein 15 (300 aa).

M1 is modified (N-acetylmethionine). An F-box domain is found at 19-66; the sequence is LLDLPWEDVLLPHVLNWVPLRQLLRLQRVSRAFRALVQLHLARLRRFD. Positions 113–269 are interaction with SMURF1; it reads NPQLRSVALA…EPSLSRLRKR (157 aa). LRR repeat units lie at residues 141–162, 167–188, 194–215, 220–241, and 246–267; these read RLQR…RGLA, ALEE…VYLA, GLRS…QELA, QLEH…RTLA, and ALRS…SRLR.

Belongs to the FBXL15 family. As to quaternary structure, part of the SCF (SKP1-CUL1-F-box) E3 ubiquitin-protein ligase complex SCF(FBXL15) composed of CUL1, SKP1, RBX1 and FBXL15. In terms of tissue distribution, expressed in heart, liver, spleen, bone, muscle, brain and kidney (at protein level).

The protein resides in the cytoplasm. Its pathway is protein modification; protein ubiquitination. Its function is as follows. Substrate recognition component of a SCF (SKP1-CUL1-F-box protein) E3 ubiquitin-protein ligase complex which mediates the ubiquitination and subsequent proteasomal degradation of SMURF1, thereby acting as a positive regulator of the BMP signaling pathway. Required for dorsal/ventral pattern formation and bone mass maintenance. Also mediates ubiquitination of SMURF2 and WWP2. This Mus musculus (Mouse) protein is F-box/LRR-repeat protein 15 (Fbxl15).